A 466-amino-acid chain; its full sequence is Argininosuccinate lyase (466 aa).

This sequence belongs to the lyase 1 family. Argininosuccinate lyase subfamily.

The protein resides in the cytoplasm. It carries out the reaction 2-(N(omega)-L-arginino)succinate = fumarate + L-arginine. It participates in amino-acid biosynthesis; L-arginine biosynthesis; L-arginine from L-ornithine and carbamoyl phosphate: step 3/3. The polypeptide is Argininosuccinate lyase (Brucella anthropi (strain ATCC 49188 / DSM 6882 / CCUG 24695 / JCM 21032 / LMG 3331 / NBRC 15819 / NCTC 12168 / Alc 37) (Ochrobactrum anthropi)).